A 304-amino-acid chain; its full sequence is Ferredoxin fas2 (304 aa).

Residues 2–29 enclose the 4Fe-4S ferredoxin-type domain; it reads KVVVNERRCFGSGQCVLVAPEVFEQSND. [3Fe-4S] cluster is bound by residues cysteine 10, cysteine 16, and cysteine 54. Residues 66–304 are transketolase-like; it reads MRQEPTEFSY…QSARSSIQQR (239 aa).

In the C-terminal section; belongs to the transketolase family. The cofactor is [3Fe-4S] cluster.

Functionally, plays a role in electron transfer. The fas operon encodes genes involved in cytokinin production and in host plant fasciation (leafy gall). This chain is Ferredoxin fas2 (fas2), found in Rhodococcoides fascians (Rhodococcus fascians).